We begin with the raw amino-acid sequence, 238 residues long: Ribonuclease PH (238 aa).

Phosphate contacts are provided by residues Arg86 and 124-126; that span reads GTR.

Belongs to the RNase PH family. In terms of assembly, homohexameric ring arranged as a trimer of dimers.

It catalyses the reaction tRNA(n+1) + phosphate = tRNA(n) + a ribonucleoside 5'-diphosphate. Phosphorolytic 3'-5' exoribonuclease that plays an important role in tRNA 3'-end maturation. Removes nucleotide residues following the 3'-CCA terminus of tRNAs; can also add nucleotides to the ends of RNA molecules by using nucleoside diphosphates as substrates, but this may not be physiologically important. Probably plays a role in initiation of 16S rRNA degradation (leading to ribosome degradation) during starvation. In Actinobacillus pleuropneumoniae serotype 5b (strain L20), this protein is Ribonuclease PH.